The following is a 442-amino-acid chain: UBX domain-containing protein 6 (442 aa).

The tract at residues 1 to 10 is mediates interaction with LMAN1; it reads MKKFFQEIKA. The segment at 13-111 is disordered; that stretch reads KFKSAGPGQK…TNSVPEPKEE (99 aa). The residue at position 36 (serine 36) is a Phosphoserine. The interval 51–63 is VCP/p97-interacting motif (VIM); the sequence is EAQMAAAAALARL. Over residues 52 to 61 the composition is skewed to low complexity; sequence AQMAAAAALA. Over residues 90–105 the composition is skewed to polar residues; it reads EATSSNNPGAPGTNSV. In terms of domain architecture, PUB spans 175–244; the sequence is VDTIAKYLDN…GQEEFYVLGE (70 aa). Residues 332–408 form the UBX domain; the sequence is RKYTYALVRV…GLVPSALLTF (77 aa).

In terms of assembly, interacts with VCP through the PUB domain (via C-terminus) and VIM motif (via N-terminus); the interaction is direct. Forms a ternary complex with CAV1 and VCP. Interacts with SYVN1. Interacts with HERPUD1. Interacts with VCPKMT. May interact with DERL1. Interacts with PLAA, VCP and YOD1; may form a complex involved in macroautophagy. Interacts with LMAN1. As to expression, widely expressed (at protein level). Highest expression in brain (at protein level).

Its subcellular location is the cytoplasm. The protein resides in the cytosol. The protein localises to the membrane. It localises to the nucleus. It is found in the cytoskeleton. Its subcellular location is the microtubule organizing center. The protein resides in the centrosome. The protein localises to the early endosome membrane. It localises to the late endosome membrane. It is found in the lysosome membrane. May negatively regulate the ATPase activity of VCP, an ATP-driven segregase that associates with different cofactors to control a wide variety of cellular processes. As a cofactor of VCP, it may play a role in the transport of CAV1 to lysosomes for degradation. It may also play a role in endoplasmic reticulum-associated degradation (ERAD) of misfolded proteins. Together with VCP and other cofactors, it may play a role in macroautophagy, regulating for instance the clearance of damaged lysosomes. This Mus musculus (Mouse) protein is UBX domain-containing protein 6.